Reading from the N-terminus, the 478-residue chain is Protein nucleotidyltransferase YdiU (478 aa).

ATP contacts are provided by G84, G86, R87, K107, D119, G120, R170, and R177. D246 functions as the Proton acceptor in the catalytic mechanism. Mg(2+) is bound by residues N247 and D256. An ATP-binding site is contributed by D256.

The protein belongs to the SELO family. Mg(2+) is required as a cofactor. Mn(2+) serves as cofactor.

It carries out the reaction L-seryl-[protein] + ATP = 3-O-(5'-adenylyl)-L-seryl-[protein] + diphosphate. The enzyme catalyses L-threonyl-[protein] + ATP = 3-O-(5'-adenylyl)-L-threonyl-[protein] + diphosphate. It catalyses the reaction L-tyrosyl-[protein] + ATP = O-(5'-adenylyl)-L-tyrosyl-[protein] + diphosphate. The catalysed reaction is L-histidyl-[protein] + UTP = N(tele)-(5'-uridylyl)-L-histidyl-[protein] + diphosphate. It carries out the reaction L-seryl-[protein] + UTP = O-(5'-uridylyl)-L-seryl-[protein] + diphosphate. The enzyme catalyses L-tyrosyl-[protein] + UTP = O-(5'-uridylyl)-L-tyrosyl-[protein] + diphosphate. Nucleotidyltransferase involved in the post-translational modification of proteins. It can catalyze the addition of adenosine monophosphate (AMP) or uridine monophosphate (UMP) to a protein, resulting in modifications known as AMPylation and UMPylation. This chain is Protein nucleotidyltransferase YdiU, found in Escherichia coli (strain SE11).